The primary structure comprises 401 residues: 8-amino-7-oxononanoate synthase (401 aa).

Arginine 24 serves as a coordination point for substrate. Pyridoxal 5'-phosphate is bound at residue 111 to 112; that stretch reads GF. Histidine 137 contributes to the substrate binding site. Pyridoxal 5'-phosphate is bound by residues serine 183, histidine 211, and threonine 240. An N6-(pyridoxal phosphate)lysine modification is found at lysine 243. Threonine 357 is a binding site for substrate.

Belongs to the class-II pyridoxal-phosphate-dependent aminotransferase family. BioF subfamily. Homodimer. Requires pyridoxal 5'-phosphate as cofactor.

It carries out the reaction 6-carboxyhexanoyl-[ACP] + L-alanine + H(+) = (8S)-8-amino-7-oxononanoate + holo-[ACP] + CO2. Its pathway is cofactor biosynthesis; biotin biosynthesis. Catalyzes the decarboxylative condensation of pimeloyl-[acyl-carrier protein] and L-alanine to produce 8-amino-7-oxononanoate (AON), [acyl-carrier protein], and carbon dioxide. In Xanthomonas campestris pv. campestris (strain 8004), this protein is 8-amino-7-oxononanoate synthase.